Reading from the N-terminus, the 704-residue chain is MPRNTALEKYRNIGICAHVDAGKTTTTERILFYTGLSHKIGEVHDGAATMDWMEQEQERGITITSAATTTFWSGMDQQFEKHRINIIDTPGHVDFTIEVERSLRVLDGAVVVFCGSSGVEPQSETVWRQANKYGVPRIVFVNKMDRSGADFERVCAQIKTRLKANVVPVQLNIGAEEDFKGVIDLIRMKAIMWNEEDMGLTYELVDIPADLQDRAEELRMEMIEAAAEASEELMEKYLEGGELSEDEIHQGLRARVLNNEIVLAFCGSAFKNKGVQAVLDGVVRYLPAPNQVPAIKCETEDGEPASRPSSDDAPFAALAFKLATDPFVGNLTFIRVYSGVLKSGDAVYNPVKGKKERVGRIVQMHANKRDEIKEVRAGDIAACIGLKDVTTGDTLCDQEDVVILEKMDFPEPVISVAVEPKSKADQEKMSIALGKLAAEDPSFRVKTDEESGQTIISGMGELHLDIVVDRMRREFKVEANVGNPQVAYRETIRSKVEQEAKFVRQSGGRGQYGHVFVRFEPLDEVDENGEAKVFKFVDEVVGGVVPKEYIGSVAKGIEEQLNNGVLAGYPMIGVKATLYDGSYHDVDSSEMAFKIAGSMALKEGAKKANACILEPIMKVEVVTPEDYLGDVMGDLNRRRGIIEGMDENPSGRVINALVPLAEMFGYATNVRSISQGRASFSMEFKKYAEVPNNIADEIIKSHNS.

The region spanning 8–290 (EKYRNIGICA…GVVRYLPAPN (283 aa)) is the tr-type G domain. Residues 17 to 24 (AHVDAGKT), 88 to 92 (DTPGH), and 142 to 145 (NKMD) contribute to the GTP site.

Belongs to the TRAFAC class translation factor GTPase superfamily. Classic translation factor GTPase family. EF-G/EF-2 subfamily.

It is found in the cytoplasm. In terms of biological role, catalyzes the GTP-dependent ribosomal translocation step during translation elongation. During this step, the ribosome changes from the pre-translocational (PRE) to the post-translocational (POST) state as the newly formed A-site-bound peptidyl-tRNA and P-site-bound deacylated tRNA move to the P and E sites, respectively. Catalyzes the coordinated movement of the two tRNA molecules, the mRNA and conformational changes in the ribosome. This chain is Elongation factor G, found in Francisella tularensis subsp. tularensis (strain FSC 198).